Reading from the N-terminus, the 316-residue chain is UDP-N-acetylenolpyruvoylglucosamine reductase (316 aa).

The 165-residue stretch at 30 to 194 folds into the FAD-binding PCMH-type domain; it reads VGGEADYLVF…LSVKFALAPG (165 aa). Arginine 173 is an active-site residue. Catalysis depends on serine 223, which acts as the Proton donor. Glutamate 293 is a catalytic residue.

It belongs to the MurB family. FAD is required as a cofactor.

The protein localises to the cytoplasm. It catalyses the reaction UDP-N-acetyl-alpha-D-muramate + NADP(+) = UDP-N-acetyl-3-O-(1-carboxyvinyl)-alpha-D-glucosamine + NADPH + H(+). It participates in cell wall biogenesis; peptidoglycan biosynthesis. In terms of biological role, cell wall formation. In Streptococcus pneumoniae serotype 2 (strain D39 / NCTC 7466), this protein is UDP-N-acetylenolpyruvoylglucosamine reductase.